The chain runs to 405 residues: S-adenosylmethionine synthase (405 aa).

141–146 (GQGSVD) lines the ATP pocket.

This sequence belongs to the AdoMet synthase 2 family. The cofactor is Mg(2+).

It catalyses the reaction L-methionine + ATP + H2O = S-adenosyl-L-methionine + phosphate + diphosphate. The protein operates within amino-acid biosynthesis; S-adenosyl-L-methionine biosynthesis; S-adenosyl-L-methionine from L-methionine: step 1/1. Catalyzes the formation of S-adenosylmethionine from methionine and ATP. The protein is S-adenosylmethionine synthase of Methanococcus maripaludis (strain C6 / ATCC BAA-1332).